We begin with the raw amino-acid sequence, 339 residues long: Glyceraldehyde-3-phosphate dehydrogenase (339 aa).

Residues Arg13 to Ile14, Asp35, and Lys84 each bind NAD(+). Residues Ser156 to Thr158, Thr187, Thr216 to Gly217, and Arg239 each bind D-glyceraldehyde 3-phosphate. Cys157 acts as the Nucleophile in catalysis. Asn321 is a binding site for NAD(+).

This sequence belongs to the glyceraldehyde-3-phosphate dehydrogenase family. Homotetramer.

Its subcellular location is the cytoplasm. The enzyme catalyses D-glyceraldehyde 3-phosphate + phosphate + NAD(+) = (2R)-3-phospho-glyceroyl phosphate + NADH + H(+). It participates in carbohydrate degradation; glycolysis; pyruvate from D-glyceraldehyde 3-phosphate: step 1/5. The polypeptide is Glyceraldehyde-3-phosphate dehydrogenase (G3PD) (Brugia malayi (Filarial nematode worm)).